A 247-amino-acid chain; its full sequence is MKALIFLAFLGAAVALPLDDDDDKIVGGYTCQKNSLPYQVSLNAGYHFCGGSLINSQWVVSAAHCYKSRIQVRLGEHNIDVVEGGEQFIDAAKIIRHPSYNANTFDNDIMLIKLNSPATLNSRVSTVSLPRSCGSSGTKCLVSGWGNTLSSGTNYPSLLQCLDAPVLSDSSCKSSYPGKITSNMFCLGFLEGGKDSCQGDSGGPVVCNGQLQGVVSWGYGCAQKGKPGVYTKVCNYVNWIQQTVAAN.

The first 15 residues, 1-15 (MKALIFLAFLGAAVA), serve as a signal peptide directing secretion. A propeptide spans 16–24 (LPLDDDDDK) (activation peptide). In terms of domain architecture, Peptidase S1 spans 25–245 (IVGGYTCQKN…YVNWIQQTVA (221 aa)). Intrachain disulfides connect Cys31–Cys161, Cys49–Cys65, Cys133–Cys234, Cys140–Cys207, Cys172–Cys186, and Cys197–Cys221. His64 (charge relay system) is an active-site residue. Ca(2+) contacts are provided by Glu76, Asn78, Val81, and Glu86. The active-site Charge relay system is the Asp108. The Charge relay system role is filled by Ser201.

It belongs to the peptidase S1 family. Requires Ca(2+) as cofactor.

It localises to the secreted. Its subcellular location is the extracellular space. It carries out the reaction Preferential cleavage: Arg-|-Xaa, Lys-|-Xaa.. The protein is Cationic trypsin-3 (Try3) of Rattus norvegicus (Rat).